The primary structure comprises 207 residues: MVATCLQVVGFVTSFVGWIGIIVTTSTNDWVVTCSYTIPTCRKMDELGSKGLWADCVMATGLHHCKPLVDILILPGYAQACRALMIAASVLGLPGILLLLTVLPCIRMGHEPGVAKYRRAQLAGVLLILLALCAIVATIWFPVCAHREITIVSFGYSLYAGWIGAVMCLVGGCVIVCCSGDAQSFGENRFYYSSGSSSPTHAKSAHV.

Methionine 1 is a topological domain (cytoplasmic). The chain crosses the membrane as a helical span at residues 2–22 (VATCLQVVGFVTSFVGWIGII). Topologically, residues 23 to 82 (VTTSTNDWVVTCSYTIPTCRKMDELGSKGLWADCVMATGLHHCKPLVDILILPGYAQACR) are extracellular. Residues 83 to 103 (ALMIAASVLGLPGILLLLTVL) traverse the membrane as a helical segment. Topologically, residues 104–122 (PCIRMGHEPGVAKYRRAQL) are cytoplasmic. Residues 123–143 (AGVLLILLALCAIVATIWFPV) form a helical membrane-spanning segment. Residues 144-157 (CAHREITIVSFGYS) are Extracellular-facing. The helical transmembrane segment at 158-178 (LYAGWIGAVMCLVGGCVIVCC) threads the bilayer. Topologically, residues 179–207 (SGDAQSFGENRFYYSSGSSSPTHAKSAHV) are cytoplasmic. Phosphoserine occurs at positions 193, 194, 197, and 198.

This sequence belongs to the claudin family. In terms of assembly, interacts with tetraspanin-3/TSPAN3. Interacts with OCLN.

Its subcellular location is the cell junction. It localises to the tight junction. The protein localises to the cell membrane. Functionally, plays a major role in tight junction-specific obliteration of the intercellular space, through calcium-independent cell-adhesion activity. The chain is Claudin-11 (Cldn11) from Rattus norvegicus (Rat).